A 266-amino-acid polypeptide reads, in one-letter code: MNKPIGVIDSGVGGLTVAKEIMRQLPNETIYYLGDIGRCPYGPRPGEQVKQYTVEIARKLMEFDIKMLVIACNTATAVALEYLQKTLSIPVIGVIEPGARTAIMTTRNQNVLVLGTEGTIKSEAYRTHIKRINPHVEVHGVACPGFVPLVEQMRYSDPTITSIVIHQTLKRWRNSESDTVILGCTHYPLLYKPIYDYFGGKKTVISSGLETAREVSALLTFSNEHASYTEHPDHRFFATGDPTHITNIIKEWLNLSVNVERISVND.

Residues 9–10 (DS) and 41–42 (YG) each bind substrate. Catalysis depends on Cys-72, which acts as the Proton donor/acceptor. 73 to 74 (NT) contacts substrate. The active-site Proton donor/acceptor is the Cys-184. 185–186 (TH) is a binding site for substrate.

This sequence belongs to the aspartate/glutamate racemases family.

It carries out the reaction L-glutamate = D-glutamate. It participates in cell wall biogenesis; peptidoglycan biosynthesis. Functionally, provides the (R)-glutamate required for cell wall biosynthesis. The protein is Glutamate racemase of Staphylococcus aureus (strain Mu3 / ATCC 700698).